The sequence spans 832 residues: WD repeat-containing protein 75 (832 aa).

WD repeat units follow at residues 4-43, 47-86, 90-131, 145-184, 193-230, 236-275, 278-317, 323-361, 375-424, 431-477, 490-528, 532-572, and 577-614; these read QCQI…KVYS, EECI…KLWD, GILI…QLVS, KEIS…YYFK, LKAT…RLWR, KEYT…VQWP, SEEK…SIID, SGII…QFYS, QQEF…KLWE, SFVL…KVWM, SWLC…TVWE, WDLK…CCWN, and ALEW…FLFQ. The tract at residues 764–798 is disordered; it reads SQSTEESKEDEEMKSEHSEADSSDETEEMESQKRF.

Component of the proposed t-UTP subcomplex of the ribosomal small subunit (SSU) processome. SSU processome is composed of more than 70 proteins and the RNA chaperone small nucleolar RNA (snoRNA) U3.

It is found in the nucleus. Its subcellular location is the nucleolus. In terms of biological role, ribosome biogenesis factor. Part of the small subunit (SSU) processome, first precursor of the small eukaryotic ribosomal subunit. During the assembly of the SSU processome in the nucleolus, many ribosome biogenesis factors, an RNA chaperone and ribosomal proteins associate with the nascent pre-rRNA and work in concert to generate RNA folding, modifications, rearrangements and cleavage as well as targeted degradation of pre-ribosomal RNA by the RNA exosome. Involved in nucleolar processing of pre-18S ribosomal RNA. Required for optimal pre-ribosomal RNA transcription by RNA polymerase I. This chain is WD repeat-containing protein 75 (wdr75), found in Xenopus laevis (African clawed frog).